The primary structure comprises 276 residues: Dermonecrotic toxin LlSicTox-alphaIV1ii (276 aa).

H5 is an active-site residue. 2 residues coordinate Mg(2+): E25 and D27. H41 (nucleophile) is an active-site residue. Intrachain disulfides connect C45-C51 and C47-C193. D85 serves as a coordination point for Mg(2+).

This sequence belongs to the arthropod phospholipase D family. Class II subfamily. The cofactor is Mg(2+). Expressed by the venom gland.

It localises to the secreted. It carries out the reaction an N-(acyl)-sphingosylphosphocholine = an N-(acyl)-sphingosyl-1,3-cyclic phosphate + choline. The catalysed reaction is an N-(acyl)-sphingosylphosphoethanolamine = an N-(acyl)-sphingosyl-1,3-cyclic phosphate + ethanolamine. It catalyses the reaction a 1-acyl-sn-glycero-3-phosphocholine = a 1-acyl-sn-glycero-2,3-cyclic phosphate + choline. The enzyme catalyses a 1-acyl-sn-glycero-3-phosphoethanolamine = a 1-acyl-sn-glycero-2,3-cyclic phosphate + ethanolamine. Its function is as follows. Dermonecrotic toxins cleave the phosphodiester linkage between the phosphate and headgroup of certain phospholipids (sphingolipid and lysolipid substrates), forming an alcohol (often choline) and a cyclic phosphate. This toxin acts on sphingomyelin (SM). It may also act on ceramide phosphoethanolamine (CPE), lysophosphatidylcholine (LPC) and lysophosphatidylethanolamine (LPE), but not on lysophosphatidylserine (LPS), and lysophosphatidylglycerol (LPG). It acts by transphosphatidylation, releasing exclusively cyclic phosphate products as second products. Induces dermonecrosis, hemolysis, increased vascular permeability, edema, inflammatory response, and platelet aggregation. The protein is Dermonecrotic toxin LlSicTox-alphaIV1ii of Loxosceles laeta (South American recluse spider).